The following is a 427-amino-acid chain: Enolase (427 aa).

Residue Gln-163 coordinates (2R)-2-phosphoglycerate. Glu-205 functions as the Proton donor in the catalytic mechanism. Positions 242, 285, and 312 each coordinate Mg(2+). 4 residues coordinate (2R)-2-phosphoglycerate: Lys-337, Arg-366, Ser-367, and Lys-388. Lys-337 acts as the Proton acceptor in catalysis.

The protein belongs to the enolase family. It depends on Mg(2+) as a cofactor.

It is found in the cytoplasm. The protein localises to the secreted. The protein resides in the cell surface. The enzyme catalyses (2R)-2-phosphoglycerate = phosphoenolpyruvate + H2O. It participates in carbohydrate degradation; glycolysis; pyruvate from D-glyceraldehyde 3-phosphate: step 4/5. In terms of biological role, catalyzes the reversible conversion of 2-phosphoglycerate (2-PG) into phosphoenolpyruvate (PEP). It is essential for the degradation of carbohydrates via glycolysis. This is Enolase from Polaromonas sp. (strain JS666 / ATCC BAA-500).